The following is a 434-amino-acid chain: Serine/threonine-protein kinase Sgk1-B (434 aa).

Residues glutamate 68–proline 94 form a disordered region. Residues phenylalanine 101 to phenylalanine 358 enclose the Protein kinase domain. ATP-binding positions include isoleucine 107 to valine 115 and lysine 130. Aspartate 225 (proton acceptor) is an active-site residue. The AGC-kinase C-terminal domain maps to serine 359 to leucine 434.

This sequence belongs to the protein kinase superfamily. AGC Ser/Thr protein kinase family.

The protein localises to the cytoplasm. The protein resides in the nucleus. Its subcellular location is the endoplasmic reticulum. The catalysed reaction is L-seryl-[protein] + ATP = O-phospho-L-seryl-[protein] + ADP + H(+). The enzyme catalyses L-threonyl-[protein] + ATP = O-phospho-L-threonyl-[protein] + ADP + H(+). Its function is as follows. Protein kinase that may play an important role in cellular stress response. Plays an important role in activating certain potassium, sodium, and chloride channels, suggesting an involvement in the regulation of processes such as cell survival, neuronal excitability and renal sodium excretion. This Xenopus laevis (African clawed frog) protein is Serine/threonine-protein kinase Sgk1-B (sgk1-b).